Here is a 268-residue protein sequence, read N- to C-terminus: Mitochondrial distribution and morphology protein 12 (268 aa).

The SMP-LTD domain maps to 1–266 (MSIDLEWCKL…FPNFHTIVMA (266 aa)). A disordered region spans residues 66 to 136 (EDDEEGSDRG…PPPAENPHPN (71 aa)). Positions 102–111 (PATNVTSSLD) are enriched in polar residues. Residues 112–121 (TRSDQPDDQK) are compositionally biased toward basic and acidic residues.

This sequence belongs to the MDM12 family. In terms of assembly, component of the ER-mitochondria encounter structure (ERMES) or MDM complex, composed of MMM1, MDM10, MDM12 and MDM34. An MMM1 homodimer associates with one molecule of MDM12 on each side in a pairwise head-to-tail manner, and the SMP-LTD domains of MMM1 and MDM12 generate a continuous hydrophobic tunnel for phospholipid trafficking.

It is found in the mitochondrion outer membrane. Its subcellular location is the endoplasmic reticulum membrane. Component of the ERMES/MDM complex, which serves as a molecular tether to connect the endoplasmic reticulum (ER) and mitochondria. Components of this complex are involved in the control of mitochondrial shape and protein biogenesis, and function in nonvesicular lipid trafficking between the ER and mitochondria. MDM12 is required for the interaction of the ER-resident membrane protein MMM1 and the outer mitochondrial membrane-resident beta-barrel protein MDM10. The MDM12-MMM1 subcomplex functions in the major beta-barrel assembly pathway that is responsible for biogenesis of all mitochondrial outer membrane beta-barrel proteins, and acts in a late step after the SAM complex. The MDM10-MDM12-MMM1 subcomplex further acts in the TOM40-specific pathway after the action of the MDM12-MMM1 complex. Essential for establishing and maintaining the structure of mitochondria and maintenance of mtDNA nucleoids. The polypeptide is Mitochondrial distribution and morphology protein 12 (Laccaria bicolor (strain S238N-H82 / ATCC MYA-4686) (Bicoloured deceiver)).